A 517-amino-acid chain; its full sequence is Cytochrome P450 monooxygenase sdnE (517 aa).

A helical membrane pass occupies residues 4 to 24 (SSILQTLAVLYVLYLLGLIIY). N-linked (GlcNAc...) asparagine glycosylation is present at N111. The helical transmembrane segment at 219-239 (FPVVFIILGLSPRAMLKLVVP) threads the bilayer. C456 is a heme binding site.

The protein belongs to the cytochrome P450 family. It depends on heme as a cofactor.

Its subcellular location is the membrane. It functions in the pathway antibiotic biosynthesis. In terms of biological role, cytochrome P450 monooxygenase; part of the gene cluster that mediates the biosynthesis of sordarin and hypoxysordarin, glycoside antibiotics with a unique tetracyclic diterpene aglycone structure. First, the geranylgeranyl diphosphate synthase sdnC constructs GGDP from farnesyl diphosphate and isopentenyl diphosphate. The diterpene cyclase sdnA then catalyzes the cyclization of GGDP to afford cycloaraneosene. Cycloaraneosene is then hydroxylated four times by the putative cytochrome P450 monooxygenases sdnB, sdnE, sdnF and sdnH to give a hydroxylated cycloaraneosene derivative such as cycloaraneosene-8,9,13,19-tetraol. Although the order of the hydroxylations is unclear, at least C8, C9 and C13 of the cycloaraneosene skeleton are hydroxylated before the sordaricin formation. Dehydration of the 13-hydroxy group of the hydroxylated cycloaraneosene derivative might be catalyzed by an unassigned hypothetical protein such as sdnG and sdnP to construct the cyclopentadiene moiety. The FAD-dependent oxidoreductase sdnN is proposed to catalyze the oxidation at C9 of the hydroxylated cycloaraneosene derivative and also catalyze the Baeyer-Villiger oxidation to give the lactone intermediate. The presumed lactone intermediate would be hydrolyzed to give an acrolein moiety and a carboxylate moiety. Then, [4+2]cycloaddition would occur between the acrolein moiety and the cyclopentadiene moiety to give sordaricin. SdnN might also be involved in the [4+2]cycloaddition after the hypothesized oxidation to accommodate the oxidized product and prompt the [4+2]cycloaddition. GDP-6-deoxy-D-altrose may be biosynthesized from GDP-D-mannose by the putative GDP-mannose-4,6-dehydratase sdnI and the short-chain dehydrogenase sdnK. The glycosyltransferase sdnJ catalyzes the attachment of 6-deoxy-D-altrose onto the 19-hydroxy group of sordaricin to give 4'-O-demethylsordarin. The methyltransferase sdnD would complete the biosynthesis of sordarin. Sordarin can be further modified into hypoxysordarin. The unique acyl chain at the 3'-hydroxy group of hypoxysordarin would be constructed by an iterative type I PKS sdnO and the trans-acting polyketide methyltransferase sdnL. SdnL would be responsible for the introduction of an alpha-methyl group of the polyketide chain. Alternatively, the beta-lactamase-like protein sdnR might be responsible for the cleavage and transfer of the polyketide chain from the PKS sdnO to sordarin. Two putative cytochrome P450 monooxygenases, sdnQ and sdnT, might catalyze the epoxidations of the polyketide chain to complete the biosynthesis of hypoxysordarin. Transcriptional regulators sdnM and sdnS are presumably encoded for the transcriptional regulation of the expression of the sdn gene cluster. This is Cytochrome P450 monooxygenase sdnE from Sordaria araneosa (Pleurage araneosa).